The chain runs to 294 residues: MYNIFKGLITALITPFKNNKLDLYAFESILNQQIKHEVDAVLIAGSTGEANSLSFEEYKLLLKTSVEIVNNRMPIISGCSSNNTAYAIELAIASKKIGVDGFMASPPSYVKPTQHGIYKHFEALHEACNLPIMLYSAPTRSGVDFSDETILRLSKLPRILALKDCGVDLERPMRIRAIVKEDFNILTGNDEVVLAFHAQGVIGWISVTSNIAPKICKELLDKWYNNDIQGALEMHQKLLPLYKALFLESNPIPVKYAAHYLGLCENEIRLPLTEASDSAKKQIKKIITSLSIKI.

Pyruvate is bound at residue Thr47. Catalysis depends on Tyr135, which acts as the Proton donor/acceptor. Residue Lys163 is the Schiff-base intermediate with substrate of the active site. Ile205 contacts pyruvate.

This sequence belongs to the DapA family. In terms of assembly, homotetramer; dimer of dimers.

The protein localises to the cytoplasm. It carries out the reaction L-aspartate 4-semialdehyde + pyruvate = (2S,4S)-4-hydroxy-2,3,4,5-tetrahydrodipicolinate + H2O + H(+). The protein operates within amino-acid biosynthesis; L-lysine biosynthesis via DAP pathway; (S)-tetrahydrodipicolinate from L-aspartate: step 3/4. Functionally, catalyzes the condensation of (S)-aspartate-beta-semialdehyde [(S)-ASA] and pyruvate to 4-hydroxy-tetrahydrodipicolinate (HTPA). This chain is 4-hydroxy-tetrahydrodipicolinate synthase, found in Rickettsia typhi (strain ATCC VR-144 / Wilmington).